The primary structure comprises 445 residues: Interferon-activable protein 202 (445 aa).

Polar residues predominate over residues 1-27 (MSNRNLRSSTNSEFSEGQHQTPSSDSS). The disordered stretch occupies residues 1-57 (MSNRNLRSSTNSEFSEGQHQTPSSDSSGHGEDQPQASPGPNKKSHTPKKNISKGAVL). Positions 42–51 (KKSHTPKKNI) are enriched in basic residues. HIN-200 domains are found at residues 46 to 243 (TPKK…IKGE) and 244 to 441 (KLLK…MEVI). Required for homomultimerization stretches follow at residues 82–89 (MFHATVAT) and 281–288 (MFHATVAT).

This sequence belongs to the HIN-200 family. Homomultimer; homotetramerizes (via HIN-200 domain 2), enhancing affinity for double-stranded DNA (dsDNA). Interacts (via HIN-200 domain 2) with AIM2 (via HIN-200 domain); preventing activation of the AIM2 inflammasome. Binds to several transcription factors, including NF-kappa-B p50 (NFKB1) and p65 (RELA), FOS, JUN, E2F1, E2F4, MYOD1 and myogenin. Also binds TP53/p53, the hypophosphorylated, growth-inhibitory form of the retinoblastoma protein and the p53-binding protein 1 (TP53BP1). Phosphorylated.

The protein resides in the cytoplasm. The protein localises to the nucleus. Its function is as follows. DNA-binding protein involved in innate immune response and has anti-inflammatory activity. Inhibits caspase activation in response to cytosolic DNA by preventing activation of the AIM2 inflammasome, probably by sequestering cytoplasmic DNA and preventing its being bound by AIM2. Also inhibits activation of the AIM2 inflammasome via a direct interaction with AIM2, which prevents the interaction between AIM2 and PYCARD and formation of the AIM2 inflammasome. Binds double-stranded DNA (dsDNA) in the cytosol. Has anti-apoptotic effects due to inhibition of the transcriptional activity of TP53/p53. Inhibits the transcriptional activity of several transcription factors, including NF-kappa-B p50 and p65, FOS, JUN, E2F1, E2F4, MYOD1 and myogenin. This is Interferon-activable protein 202 from Mus musculus (Mouse).